The primary structure comprises 1311 residues: Sterol regulatory element-binding protein cleavage-activating protein (1311 aa).

Residues 1–18 lie on the Cytoplasmic side of the membrane; sequence MPLIDKLRERISRAFYSH. Residues 19–39 form a helical membrane-spanning segment; the sequence is GLLCASYPIPIIILTALCILA. At 40–277 the chain is on the lumenal side; that stretch reads SCYPLLKLPL…HIVHVHFKEE (238 aa). The loop-1 stretch occupies residues 46-282; sequence KLPLPGTGPV…HFKEEIGIAE (237 aa). N-linked (GlcNAc...) asparagine glycosylation is found at Asn242 and Asn261. Residues 278 to 298 form a helical membrane-spanning segment; sequence IGIAELIPLVTTYIILFAYIY. The SSD domain occupies 282–440; sequence ELIPLVTTYI…MFFFTTVLSI (159 aa). Topologically, residues 299–310 are cytoplasmic; it reads FSTRKIDLVKSK. Residues 311 to 331 form a helical membrane-spanning segment; it reads WGLALAAVVTVLSSLLMSVGL. Over 332 to 342 the chain is Lumenal; that stretch reads CTLFGLTPTLN. A helical transmembrane segment spans residues 343 to 363; the sequence is GGEIFPYLVVVIGLENVLVLT. The Cytoplasmic segment spans residues 364 to 399; sequence KSVVSTPVDLEVKLRIAQGLRNESWFIMKNMATELG. A helical transmembrane segment spans residues 400 to 420; that stretch reads IILIGYFTLVPAIQEFCLFAV. A topological domain (lumenal) is located at residue Val421. Residues 422 to 442 form a helical membrane-spanning segment; sequence GLVSDFFLQMFFFTTVLSIDI. Over 443–512 the chain is Cytoplasmic; sequence RRMELADLNK…FFARTRLAQR (70 aa). Residues 445–450 carry the ER export signal motif; sequence MELADL. A helical transmembrane segment spans residues 513–533; sequence IIMAGTVVWIGILVYTDPAGL. A loop-7 region spans residues 529–726; the sequence is DPAGLRNYLT…QTPADVTLYK (198 aa). The Lumenal segment spans residues 534-723; it reads RNYLTVHVTE…TENQTPADVT (190 aa). Asn583 and Asn651 each carry an N-linked (GlcNAc...) asparagine glycan. The chain crosses the membrane as a helical span at residues 724–744; the sequence is LYKVAALGLASGIFLVLFFFL. The Cytoplasmic segment spans residues 745 to 1311; it reads LYRLLCPKNY…YVPSVLEKLD (567 aa). The interaction with srebf stretch occupies residues 747-1311; the sequence is RLLCPKNYGQ…YVPSVLEKLD (565 aa). WD repeat units lie at residues 790–827, 997–1034, 1037–1076, 1109–1146, 1149–1187, 1190–1227, and 1230–1267; these read GHHM…CLTI, SFES…LRCS, DGQS…NQLQ, AHRK…CLFT, GHSG…RVSH, GHRG…KLYS, and QDLG…LLQT.

This sequence belongs to the WD repeat SCAP family. As to quaternary structure, membrane region forms a homotetramer. Component of the SCAP-SREBP complex (composed of SCAP and srebf1/srebp1 or srebf2/srebp2). Forms a ternary complex with insig1 or insig2 through its transmembrane domains at high sterol concentrations. Interacts with the SEC23-SEC24 complex.

The protein resides in the endoplasmic reticulum membrane. Its subcellular location is the golgi apparatus membrane. It is found in the cytoplasmic vesicle. The protein localises to the COPII-coated vesicle membrane. Functionally, escort protein required for cholesterol as well as lipid homeostasis. Regulates export of the SCAP-SREBP complex from the endoplasmic reticulum to the Golgi upon low cholesterol, thereby regulating the processing of sterol regulatory element-binding proteins (SREBPs) SREBF1/SREBP1 and SREBF2/SREBP2. At high sterol concentrations, formation of a ternary complex with INSIG (INSIG1 or INSIG2) leads to mask the ER export signal in SCAP, promoting retention of the complex in the endoplasmic reticulum. Low sterol concentrations trigger release of INSIG, a conformational change in the SSD domain of SCAP, unmasking of the ER export signal, promoting recruitment into COPII-coated vesicles and transport of the SCAP-SREBP to the Golgi: in the Golgi, SREBPs are then processed, releasing the transcription factor fragment of SREBPs from the membrane, its import into the nucleus and up-regulation of LDLR, INSIG1 and the mevalonate pathway. Binds cholesterol via its SSD domain. In Xenopus laevis (African clawed frog), this protein is Sterol regulatory element-binding protein cleavage-activating protein.